A 137-amino-acid chain; its full sequence is Methylglyoxal synthase (137 aa).

The 137-residue stretch at 1–137 folds into the MGS-like domain; it reads MNIALVAHDK…KLSHNDEPPA (137 aa). Substrate-binding positions include His8, Lys12, 34–37, and 54–55; these read TGTT and SG. Catalysis depends on Asp60, which acts as the Proton donor/acceptor. Substrate is bound at residue His87.

This sequence belongs to the methylglyoxal synthase family.

The enzyme catalyses dihydroxyacetone phosphate = methylglyoxal + phosphate. In terms of biological role, catalyzes the formation of methylglyoxal from dihydroxyacetone phosphate. The sequence is that of Methylglyoxal synthase from Exiguobacterium sp. (strain ATCC BAA-1283 / AT1b).